The chain runs to 421 residues: Subtilisin-like protease 2 (421 aa).

Residues 1–16 form the signal peptide; it reads MQLLNFGLLLLPFVAG. Residues 17 to 122 constitute a propeptide that is removed on maturation; it reads DLAPQPEPLL…VHPDQHVYLA (106 aa). The 87-residue stretch at 36 to 122 folds into the Inhibitor I9 domain; that stretch reads QYIVTLKEGL…VHPDQHVYLA (87 aa). The Peptidase S8 domain maps to 131–421; the sequence is RWGLGYMSSK…ERKFTLPKYF (291 aa). Active-site charge relay system residues include D169 and H201. 3 N-linked (GlcNAc...) asparagine glycosylation sites follow: N248, N261, and N348. The active-site Charge relay system is S357. N388 carries an N-linked (GlcNAc...) asparagine glycan.

Belongs to the peptidase S8 family.

It localises to the secreted. In terms of biological role, secreted subtilisin-like serine protease with keratinolytic activity that contributes to pathogenicity. The chain is Subtilisin-like protease 2 (SUB2) from Trichophyton tonsurans (Scalp ringworm fungus).